The following is a 1528-amino-acid chain: Multidrug resistance-associated protein 1 (1528 aa).

The Extracellular portion of the chain corresponds to 1 to 33; that stretch reads MALRSFCSADGSDPLWDWNVTWHTSNPDFTKCF. N-linked (GlcNAc...) asparagine glycosylation occurs at N19. A helical transmembrane segment spans residues 34-54; sequence QNTVLTWVPCFYLWSCFPLYF. Over 55 to 74 the chain is Cytoplasmic; sequence FYLSRHDRGYIQMTHLNKTK. Residues 75–95 form a helical membrane-spanning segment; it reads TALGFFLWIICWADLFYSFWE. At 96–100 the chain is on the extracellular side; it reads RSQGV. The chain crosses the membrane as a helical span at residues 101 to 121; it reads LRAPVLLVSPTLLGITMLLAT. The Cytoplasmic portion of the chain corresponds to 122-133; sequence FLIQLERRKGVQ. A helical membrane pass occupies residues 134 to 154; that stretch reads SSGIMLTFWLVALLCALAILR. Residues 155-172 lie on the Extracellular side of the membrane; it reads SKIISALKKDAHVDVFRD. Residues 173-193 form a helical membrane-spanning segment; the sequence is STFYLYFTLVLVQLVLSCFSD. The Cytoplasmic segment spans residues 194–317; it reads CSPLFSETVH…KDREPSLFKV (124 aa). The residue at position 277 (Y277) is a Phosphotyrosine. S290 bears the Phosphoserine mark. Residues 318–338 form a helical membrane-spanning segment; that stretch reads LYKTFGPYFLMSFLYKALHDL. The 284-residue stretch at 326 to 609 folds into the ABC transmembrane type-1 1 domain; it reads FLMSFLYKAL…LPMVISSIVQ (284 aa). At 339-364 the chain is on the extracellular side; that stretch reads MMFAGPKILELIINFVNDREAPDWQG. Residues 365-385 form a helical membrane-spanning segment; the sequence is YFYTALLFVSACLQTLALHQY. The Cytoplasmic portion of the chain corresponds to 386–441; it reads FHICFVSGMRIKTAVVGAVYRKALLITNAARKSSTVGEIVNLMSVDAQRFMDLATY. Residues 442 to 462 traverse the membrane as a helical segment; the sequence is INMIWSAPLQVILALYFLWLS. At 463–465 the chain is on the extracellular side; the sequence is LGP. The chain crosses the membrane as a helical span at residues 466 to 486; the sequence is SVLAGVAVMILMVPLNAVMAM. The Cytoplasmic segment spans residues 487–548; it reads KTKTYQVAHM…VLKKSAYLAA (62 aa). Residue K504 is modified to N6-succinyllysine. The chain crosses the membrane as a helical span at residues 549–569; sequence VGTFTWVCTPFLVALSTFAVF. The Extracellular segment spans residues 570 to 591; that stretch reads VTVDERNILDAKKAFVSLALFN. The chain crosses the membrane as a helical span at residues 592–612; the sequence is ILRFPLNILPMVISSIVQASV. Over 613 to 963 the chain is Cytoplasmic; sequence SLKRLRIFLS…VQLSVYWNYM (351 aa). The ABC transporter 1 domain maps to 644–868; that stretch reads ITVKNATFTW…DGAFAEFLRT (225 aa). 678–685 is a binding site for ATP; that stretch reads GQVGCGKS. Disordered stretches follow at residues 876–895 and 909–929; these read LASE…PVEN and RHLS…SSIA. Phosphoserine occurs at positions 878, 882, 912, and 927. Over residues 910-929 the composition is skewed to polar residues; sequence HLSNSSSHSGDTSQQHSSIA. A helical transmembrane segment spans residues 964–984; that stretch reads KAIGLFITFLSIFLFLCNHVS. Residues 971–1253 form the ABC transmembrane type-1 2 domain; it reads TFLSIFLFLC…LVRMSSEMET (283 aa). Residues 985 to 1022 lie on the Extracellular side of the membrane; sequence ALASNYWLSLWTDDPPVVNGTQANRNFRLSVYGALGIL. An N-linked (GlcNAc...) asparagine glycan is attached at N1003. A helical membrane pass occupies residues 1023–1043; that stretch reads QGAAIFGYSMAVSIGGIFASR. The Cytoplasmic segment spans residues 1044 to 1086; that stretch reads RLHLDLLYNVLRSPMSFFERTPSGNLVNRFSKELDTVDSMIPQ. Residues 1087 to 1107 traverse the membrane as a helical segment; it reads VIKMFMGSLFSVIGAVIIILL. Position 1108 (A1108) is a topological domain, extracellular. A helical membrane pass occupies residues 1109 to 1129; it reads TPIAAVIIPPLGLVYFFVQRF. Residues 1130–1200 are Cytoplasmic-facing; that stretch reads YVASSRQLKR…VANRWLAVRL (71 aa). Residues 1201-1221 traverse the membrane as a helical segment; sequence ECVGNCIVLFAALFAVISRHS. Residues 1222–1223 are Extracellular-facing; that stretch reads LS. Residues 1224-1244 form a helical membrane-spanning segment; the sequence is AGLVGLSVSYSLQITAYLNWL. At 1245–1528 the chain is on the cytoplasmic side; sequence VRMSSEMETN…YSMAKDAGLV (284 aa). Positions 1290–1524 constitute an ABC transporter 2 domain; sequence VEFRDYCLRY…RGIFYSMAKD (235 aa). Residue 1324–1331 participates in ATP binding; it reads GRTGAGKS.

Belongs to the ABC transporter superfamily. ABCC family. Conjugate transporter (TC 3.A.1.208) subfamily.

The protein resides in the cell membrane. It is found in the basolateral cell membrane. The catalysed reaction is ATP + H2O + xenobioticSide 1 = ADP + phosphate + xenobioticSide 2.. It carries out the reaction an S-substituted glutathione(in) + ATP + H2O = an S-substituted glutathione(out) + ADP + phosphate + H(+). The enzyme catalyses leukotriene C4(in) + ATP + H2O = leukotriene C4(out) + ADP + phosphate + H(+). It catalyses the reaction sphing-4-enine 1-phosphate(in) + ATP + H2O = sphing-4-enine 1-phosphate(out) + ADP + phosphate + H(+). The catalysed reaction is 17beta-estradiol 17-O-(beta-D-glucuronate)(in) + ATP + H2O = 17beta-estradiol 17-O-(beta-D-glucuronate)(out) + ADP + phosphate + H(+). It carries out the reaction vincristine(in) + ATP + H2O = vincristine(out) + ADP + phosphate + H(+). The enzyme catalyses daunorubicin(in) + ATP + H2O = daunorubicin(out) + ADP + phosphate + H(+). It catalyses the reaction 2',3'-cGAMP(in) + ATP + H2O = 2',3'-cGAMP(out) + ADP + phosphate + H(+). The catalysed reaction is S-[(2E,6E,10E)-geranylgeranyl]-L-glutathione(in) + ATP + H2O = S-[(2E,6E,10E)-geranylgeranyl]-L-glutathione(out) + ADP + phosphate + H(+). It carries out the reaction prostaglandin A2-S-(R)-glutathione(in) + ATP + H2O = prostaglandin A2-S-(R)-glutathione(out) + ADP + phosphate + H(+). The enzyme catalyses prostaglandin A2-S-(S)-glutathione(in) + ATP + H2O = prostaglandin A2-S-(S)-glutathione(out) + ADP + phosphate + H(+). MK 571 inhibits sphingosine 1-phosphate and leukotriene C4 export. In terms of biological role, mediates export of organic anions and drugs from the cytoplasm. Mediates ATP-dependent transport of glutathione and glutathione conjugates, leukotriene C4, estradiol-17-beta-o-glucuronide, methotrexate, antiviral drugs and other xenobiotics. Confers resistance to anticancer drugs by decreasing accumulation of drugs in cells, and by mediating ATP- and GSH-dependent drug export. Hydrolyzes ATP with low efficiency. Catalyzes the export of sphingosine 1-phosphate from mast cells independently of their degranulation. Participates in inflammatory response by allowing export of leukotriene C4 from leukotriene C4-synthesizing cells. Mediates ATP-dependent, GSH-independent cyclic GMP-AMP (cGAMP) export. Thus, by limiting intracellular cGAMP concentrations negatively regulates the cGAS-STING pathway. Exports S-geranylgeranyl-glutathione (GGG) in lymphoid cells and stromal compartments of lymphoid organs. ABCC1 (via extracellular transport) with GGT5 (via GGG catabolism) establish GGG gradients within lymphoid tissues to position P2RY8-positive lymphocytes at germinal centers in lymphoid follicles and restrict their chemotactic transmigration from blood vessels to the bone marrow parenchyma. Mediates basolateral export of GSH-conjugated R- and S-prostaglandin A2 diastereomers in polarized epithelial cells. The chain is Multidrug resistance-associated protein 1 from Mus musculus (Mouse).